Consider the following 32-residue polypeptide: ilv operon leader peptide (32 aa).

This is ilv operon leader peptide (ilvL) from Escherichia coli O157:H7.